Consider the following 489-residue polypeptide: Glutamyl-tRNA(Gln) amidotransferase subunit A (489 aa).

Active-site charge relay system residues include lysine 77 and serine 152. The active-site Acyl-ester intermediate is the serine 176.

It belongs to the amidase family. GatA subfamily. As to quaternary structure, heterotrimer of A, B and C subunits.

The enzyme catalyses L-glutamyl-tRNA(Gln) + L-glutamine + ATP + H2O = L-glutaminyl-tRNA(Gln) + L-glutamate + ADP + phosphate + H(+). In terms of biological role, allows the formation of correctly charged Gln-tRNA(Gln) through the transamidation of misacylated Glu-tRNA(Gln) in organisms which lack glutaminyl-tRNA synthetase. The reaction takes place in the presence of glutamine and ATP through an activated gamma-phospho-Glu-tRNA(Gln). In Protochlamydia amoebophila (strain UWE25), this protein is Glutamyl-tRNA(Gln) amidotransferase subunit A.